Here is a 74-residue protein sequence, read N- to C-terminus: Putative membrane protein insertion efficiency factor (74 aa).

Belongs to the UPF0161 family.

The protein resides in the cell membrane. Functionally, could be involved in insertion of integral membrane proteins into the membrane. The chain is Putative membrane protein insertion efficiency factor from Anoxybacillus flavithermus (strain DSM 21510 / WK1).